We begin with the raw amino-acid sequence, 226 residues long: Pyridoxal 5'-phosphate synthase subunit PdxT (226 aa).

60-62 (GES) serves as a coordination point for L-glutamine. The Nucleophile role is filled by Cys92. L-glutamine contacts are provided by residues Arg121 and 150–151 (IR). Active-site charge relay system residues include His191 and Glu193.

The protein belongs to the glutaminase PdxT/SNO family. In terms of assembly, in the presence of PdxS, forms a dodecamer of heterodimers. Only shows activity in the heterodimer.

The enzyme catalyses aldehydo-D-ribose 5-phosphate + D-glyceraldehyde 3-phosphate + L-glutamine = pyridoxal 5'-phosphate + L-glutamate + phosphate + 3 H2O + H(+). It carries out the reaction L-glutamine + H2O = L-glutamate + NH4(+). Its pathway is cofactor biosynthesis; pyridoxal 5'-phosphate biosynthesis. Catalyzes the hydrolysis of glutamine to glutamate and ammonia as part of the biosynthesis of pyridoxal 5'-phosphate. The resulting ammonia molecule is channeled to the active site of PdxS. In Nocardia farcinica (strain IFM 10152), this protein is Pyridoxal 5'-phosphate synthase subunit PdxT.